The primary structure comprises 78 residues: ATP synthase subunit c (78 aa).

Transmembrane regions (helical) follow at residues 11 to 31 and 53 to 73; these read FIGA…VGHV and LFIG…VALL.

The protein belongs to the ATPase C chain family. F-type ATPases have 2 components, F(1) - the catalytic core - and F(0) - the membrane proton channel. F(1) has five subunits: alpha(3), beta(3), gamma(1), delta(1), epsilon(1). F(0) has four main subunits: a(1), b(1), b'(1) and c(10-14). The alpha and beta chains form an alternating ring which encloses part of the gamma chain. F(1) is attached to F(0) by a central stalk formed by the gamma and epsilon chains, while a peripheral stalk is formed by the delta, b and b' chains.

The protein localises to the cell inner membrane. Functionally, f(1)F(0) ATP synthase produces ATP from ADP in the presence of a proton or sodium gradient. F-type ATPases consist of two structural domains, F(1) containing the extramembraneous catalytic core and F(0) containing the membrane proton channel, linked together by a central stalk and a peripheral stalk. During catalysis, ATP synthesis in the catalytic domain of F(1) is coupled via a rotary mechanism of the central stalk subunits to proton translocation. Key component of the F(0) channel; it plays a direct role in translocation across the membrane. A homomeric c-ring of between 10-14 subunits forms the central stalk rotor element with the F(1) delta and epsilon subunits. This is ATP synthase subunit c from Jannaschia sp. (strain CCS1).